A 175-amino-acid chain; its full sequence is Putative lipoprotein LppN (175 aa).

An N-terminal signal peptide occupies residues 1–20 (MRLPGRHVLYALSAVTMLAA). Residue Cys21 is the site of N-palmitoyl cysteine attachment. A lipid anchor (S-diacylglycerol cysteine) is attached at Cys21. The disordered stretch occupies residues 31–56 (ASTNMNPTNPPATAETATVSPTPAPQ). Residues 33–48 (TNMNPTNPPATAETAT) show a composition bias toward low complexity.

It localises to the cell membrane. The polypeptide is Putative lipoprotein LppN (lppN) (Mycobacterium bovis (strain ATCC BAA-935 / AF2122/97)).